Consider the following 655-residue polypeptide: tRNA uridine 5-carboxymethylaminomethyl modification enzyme MnmG (655 aa).

13-18 (GGGHAG) is an FAD binding site. Position 281–295 (281–295 (GPRYCPSVEDKINRF)) interacts with NAD(+).

This sequence belongs to the MnmG family. Homodimer. Heterotetramer of two MnmE and two MnmG subunits. FAD serves as cofactor.

It is found in the cytoplasm. Functionally, NAD-binding protein involved in the addition of a carboxymethylaminomethyl (cmnm) group at the wobble position (U34) of certain tRNAs, forming tRNA-cmnm(5)s(2)U34. This is tRNA uridine 5-carboxymethylaminomethyl modification enzyme MnmG from Paracidovorax citrulli (strain AAC00-1) (Acidovorax citrulli).